A 135-amino-acid chain; its full sequence is Probable histone H2A.1 (135 aa).

The protein belongs to the histone H2A family. As to quaternary structure, the nucleosome is a histone octamer containing two molecules each of H2A, H2B, H3 and H4 assembled in one H3-H4 heterotetramer and two H2A-H2B heterodimers. The octamer wraps approximately 147 bp of DNA.

Its subcellular location is the nucleus. The protein localises to the chromosome. Core component of nucleosome. Nucleosomes wrap and compact DNA into chromatin, limiting DNA accessibility to the cellular machineries which require DNA as a template. Histones thereby play a central role in transcription regulation, DNA repair, DNA replication and chromosomal stability. DNA accessibility is regulated via a complex set of post-translational modifications of histones, also called histone code, and nucleosome remodeling. This is Probable histone H2A.1 from Oryza sativa subsp. japonica (Rice).